Reading from the N-terminus, the 2264-residue chain is Protein Ycf2 (2264 aa).

1611 to 1618 is an ATP binding site; sequence GSIGTGRS.

Belongs to the Ycf2 family.

The protein localises to the plastid. The protein resides in the chloroplast stroma. In terms of biological role, probable ATPase of unknown function. Its presence in a non-photosynthetic plant (Epifagus virginiana) and experiments in tobacco indicate that it has an essential function which is probably not related to photosynthesis. The polypeptide is Protein Ycf2 (Lactuca sativa (Garden lettuce)).